A 229-amino-acid chain; its full sequence is Protein TraJ (229 aa).

It localises to the cytoplasm. Functionally, this protein is essential for positively regulating the expression of transfer genes that are involved in the conjugal transfer of DNA between bacterial cells. This chain is Protein TraJ (traJ), found in Escherichia coli (strain K12).